The chain runs to 388 residues: Processive diacylglycerol beta-glucosyltransferase (388 aa).

The protein belongs to the glycosyltransferase 28 family. UgtP subfamily.

The protein localises to the cell membrane. The enzyme catalyses a 1,2-diacyl-3-O-(beta-D-glucopyranosyl)-sn-glycerol + UDP-alpha-D-glucose = a 1,2-diacyl-3-O-(beta-D-Glc-(1-&gt;6)-beta-D-Glc)-sn-glycerol + UDP + H(+). The catalysed reaction is a 1,2-diacyl-3-O-(beta-D-Glc-(1-&gt;6)-beta-D-Glc)-sn-glycerol + UDP-alpha-D-glucose = a 1,2-diacyl-3-O-(beta-D-Glc-(1-&gt;6)-beta-D-Glc-(1-&gt;6)-beta-D-Glc)-sn-glycerol + UDP + H(+). It catalyses the reaction a 1,2-diacyl-sn-glycerol + UDP-alpha-D-glucose = a 1,2-diacyl-3-O-(beta-D-glucopyranosyl)-sn-glycerol + UDP + H(+). Its pathway is glycolipid metabolism; diglucosyl-diacylglycerol biosynthesis. Processive glucosyltransferase involved in the biosynthesis of both the bilayer- and non-bilayer-forming membrane glucolipids. Is able to successively transfer up to three glucosyl residues to diacylglycerol (DAG), thereby catalyzing the formation of beta-monoglucosyl-DAG (3-O-(beta-D-glucopyranosyl)-1,2-diacyl-sn-glycerol), beta-diglucosyl-DAG (3-O-(beta-D-glucopyranosyl-beta-(1-&gt;6)-D-glucopyranosyl)-1,2-diacyl-sn-glycerol) and beta-triglucosyl-DAG (3-O-(beta-D-glucopyranosyl-beta-(1-&gt;6)-D-glucopyranosyl-beta-(1-&gt;6)-D-glucopyranosyl)-1,2-diacyl-sn-glycerol). Beta-diglucosyl-DAG is the predominant glycolipid found in Bacillales and is also used as a membrane anchor for lipoteichoic acid (LTA). The polypeptide is Processive diacylglycerol beta-glucosyltransferase (Bacillus cereus (strain B4264)).